A 477-amino-acid polypeptide reads, in one-letter code: UTP--glucose-1-phosphate uridylyltransferase (477 aa).

The residue at position 2 (A2) is an N-acetylalanine. UTP contacts are provided by residues 92-95 (LNGG), K106, Q169, and G198. A substrate-binding site is contributed by 94-95 (GG). Residues H199 and 227–229 (NSD) each bind substrate. Residues D229 and K367 each coordinate UTP.

Belongs to the UDPGP type 1 family. Monomer. It depends on Mg(2+) as a cofactor.

The protein localises to the cytoplasm. It catalyses the reaction alpha-D-glucose 1-phosphate + UTP + H(+) = UDP-alpha-D-glucose + diphosphate. Its activity is regulated as follows. Inhibition by uncomplexed, free UTP. Plays a central role as a glucosyl donor in cellular metabolic pathways. The chain is UTP--glucose-1-phosphate uridylyltransferase from Solanum tuberosum (Potato).